Reading from the N-terminus, the 651-residue chain is Mitogen-activated protein kinase kinase kinase 3 (651 aa).

The Protein kinase domain maps to 68-330 (WRKGELIGCG…ATELLQHPFV (263 aa)). ATP-binding positions include 74–82 (IGCGAFGRV) and lysine 97. The stretch at 105–130 (SASKEKTQGHIRELEEEVQLLKNLSH) forms a coiled coil. Glycyl lysine isopeptide (Lys-Gly) (interchain with G-Cter in ubiquitin) cross-links involve residues lysine 108 and lysine 110. Aspartate 196 functions as the Proton acceptor in the catalytic mechanism. A disordered region spans residues 573 to 608 (MPSPLKSSKRTLNTSRVMQSGTEPTQVNESTKKGVN). The segment covering 582 to 608 (RTLNTSRVMQSGTEPTQVNESTKKGVN) has biased composition (polar residues). Positions 618 to 641 (RKWEEELYEELERHRENLRHAGAG) form a coiled coil.

Belongs to the protein kinase superfamily. STE Ser/Thr protein kinase family. MAP kinase kinase kinase subfamily. Interacts with NACK2 and MKK6. Expressed in roots and flowers.

Its subcellular location is the cytoplasm. It is found in the cytoskeleton. It carries out the reaction L-seryl-[protein] + ATP = O-phospho-L-seryl-[protein] + ADP + H(+). It catalyses the reaction L-threonyl-[protein] + ATP = O-phospho-L-threonyl-[protein] + ADP + H(+). Involved in cortical microtubules organization and stabilization by regulating the phosphorylation state of microtubule-associated proteins such as MAP65-1. This is Mitogen-activated protein kinase kinase kinase 3 (ANP3) from Arabidopsis thaliana (Mouse-ear cress).